Here is a 633-residue protein sequence, read N- to C-terminus: Probable sodium/potassium/calcium exchanger CG1090 (633 aa).

The first 21 residues, 1–21 (MWNMGLLFLIYYCVSIYSAKG), serve as a signal peptide directing secretion. Residues 22–111 (DTKDGQVLPL…PLMNKWARQH (90 aa)) lie on the Extracellular side of the membrane. A helical transmembrane segment spans residues 112–132 (GGLILHILVAVFTFFGLAIVC). The Cytoplasmic portion of the chain corresponds to 133 to 157 (DEYFVASLDRLCEELKLSPDVAGAT). An Alpha-1 repeat occupies 153-193 (VAGATFMAAGSSAPELATVVIGVFFAKDDIGISGVIGSAVF). A helical transmembrane segment spans residues 158 to 178 (FMAAGSSAPELATVVIGVFFA). Residues 179 to 181 (KDD) are Extracellular-facing. The chain crosses the membrane as a helical span at residues 182–202 (IGISGVIGSAVFNIMFVISVC). At 203 to 220 (ALCSGTVCQLNWWPLVRD) the chain is on the cytoplasmic side. 2 helical membrane-spanning segments follow: residues 221-241 (CFFYCVSILVMLIIIFNDVIS) and 242-262 (CFESVVMLLCYVGYCVALHFN). Over 263-427 (TELERWALGL…EPRRDPLLRP (165 aa)) the chain is Extracellular. Polar residues-rich tracts occupy residues 298–310 (YTQESVGQTQGQK), 320–333 (AKPQSDYQDYSDPN), and 395–405 (QVVSTQATSAG). The interval 298–422 (YTQESVGQTQ…TDKQREPRRD (125 aa)) is disordered. A compositionally biased stretch (basic and acidic residues) spans 411–422 (KSTDKQREPRRD). The chain crosses the membrane as a helical span at residues 428–448 (MEGGLPALVSWYVVYPIHFLC). Residues 449-468 (KKTMPDCRQEQYRNWYPFTF) are Cytoplasmic-facing. Residues 469-489 (LMSMVWISFYSYFMVWMITVI) form a helical membrane-spanning segment. Topologically, residues 490–500 (GSTLAIPDTVM) are extracellular. A helical membrane pass occupies residues 501–521 (GLTFVAAGVSVPDALSSIAVI). An Alpha-2 repeat occupies 506 to 537 (AAGVSVPDALSSIAVIKEGFGDMAVSNAIGSN). The Cytoplasmic portion of the chain corresponds to 522–535 (KEGFGDMAVSNAIG). A helical transmembrane segment spans residues 536 to 556 (SNVFDILVCLGLPWFIQTAII). Residues 557 to 568 (KPGSHVNVISKG) lie on the Extracellular side of the membrane. A helical membrane pass occupies residues 569–589 (LAYSTLSLFSTVVFLILSTHL). The Cytoplasmic portion of the chain corresponds to 590 to 597 (NGWKLDKR). The chain crosses the membrane as a helical span at residues 598 to 618 (LGIILMVWYLFFITLASLYEL). Over 619–633 (NVFGYMNPPECPSTY) the chain is Extracellular.

Belongs to the Ca(2+):cation antiporter (CaCA) (TC 2.A.19) family. SLC24A subfamily.

The protein localises to the membrane. In terms of biological role, may function in the removal and maintenance of calcium homeostasis. Transports one Ca(2+) and 1 K(+) in exchange for 4 Na(+). The protein is Probable sodium/potassium/calcium exchanger CG1090 of Drosophila melanogaster (Fruit fly).